A 1241-amino-acid polypeptide reads, in one-letter code: DNA-directed RNA polymerase subunit beta (1241 aa).

The segment at E1186 to N1210 is disordered. Positions Q1200–N1210 are enriched in acidic residues.

The protein belongs to the RNA polymerase beta chain family. The RNAP catalytic core consists of 2 alpha, 1 beta, 1 beta' and 1 omega subunit. When a sigma factor is associated with the core the holoenzyme is formed, which can initiate transcription.

The catalysed reaction is RNA(n) + a ribonucleoside 5'-triphosphate = RNA(n+1) + diphosphate. In terms of biological role, DNA-dependent RNA polymerase catalyzes the transcription of DNA into RNA using the four ribonucleoside triphosphates as substrates. The chain is DNA-directed RNA polymerase subunit beta from Clostridium novyi (strain NT).